A 102-amino-acid chain; its full sequence is Large ribosomal subunit protein uL23c (102 aa).

The protein belongs to the universal ribosomal protein uL23 family. As to quaternary structure, part of the 50S ribosomal subunit.

It localises to the plastid. The protein localises to the chloroplast. In terms of biological role, binds to 23S rRNA. This is Large ribosomal subunit protein uL23c (rpl23) from Phaeodactylum tricornutum (strain CCAP 1055/1).